We begin with the raw amino-acid sequence, 309 residues long: Probable lipid kinase YegS-like (309 aa).

The DAGKc domain occupies 1–134 (MTTPRWRLIL…IDLLRVDADG (134 aa)). ATP is bound by residues Thr39, 65–71 (GDGTLSA), and Thr96. Residues Leu219, Asp222, and Leu224 each coordinate Mg(2+). Glu280 serves as the catalytic Proton acceptor.

This sequence belongs to the diacylglycerol/lipid kinase family. YegS lipid kinase subfamily. Mg(2+) is required as a cofactor. Requires Ca(2+) as cofactor.

The protein localises to the cytoplasm. Probably phosphorylates lipids; the in vivo substrate is unknown. The chain is Probable lipid kinase YegS-like from Stenotrophomonas maltophilia (strain K279a).